Reading from the N-terminus, the 207-residue chain is Large ribosomal subunit protein uL4 (207 aa).

The segment at 48–86 (THKVKNRSEVRGGGRKPWRQKGTGRARQGSIRSPQWRGG) is disordered. Basic residues predominate over residues 60–71 (GGRKPWRQKGTG).

Belongs to the universal ribosomal protein uL4 family. Part of the 50S ribosomal subunit.

Functionally, one of the primary rRNA binding proteins, this protein initially binds near the 5'-end of the 23S rRNA. It is important during the early stages of 50S assembly. It makes multiple contacts with different domains of the 23S rRNA in the assembled 50S subunit and ribosome. Its function is as follows. Forms part of the polypeptide exit tunnel. This Bacillus licheniformis (strain ATCC 14580 / DSM 13 / JCM 2505 / CCUG 7422 / NBRC 12200 / NCIMB 9375 / NCTC 10341 / NRRL NRS-1264 / Gibson 46) protein is Large ribosomal subunit protein uL4.